Consider the following 104-residue polypeptide: UPF0045 protein YqgV (104 aa).

The protein belongs to the UPF0045 family.

In Bacillus subtilis (strain 168), this protein is UPF0045 protein YqgV (yqgV).